The sequence spans 852 residues: Probable inorganic carbon transporter subunit DabA (852 aa).

4 residues coordinate Zn(2+): Cys-370, Asp-372, His-554, and Cys-569.

Belongs to the inorganic carbon transporter (TC 9.A.2) DabA family. In terms of assembly, forms a complex with DabB. Zn(2+) is required as a cofactor.

The protein resides in the cell inner membrane. Functionally, part of an energy-coupled inorganic carbon pump. The protein is Probable inorganic carbon transporter subunit DabA of Novosphingobium aromaticivorans (strain ATCC 700278 / DSM 12444 / CCUG 56034 / CIP 105152 / NBRC 16084 / F199).